We begin with the raw amino-acid sequence, 180 residues long: ADP-ribosylation factor 4 (180 aa).

Residue Gly2 is the site of N-myristoyl glycine attachment. GTP is bound by residues 24 to 31 (GLDAAGKT), 67 to 71 (DVGGQ), and 126 to 129 (NKQD). Position 147 is a phosphoserine (Ser147).

The protein belongs to the small GTPase superfamily. Arf family. As to quaternary structure, forms a complex containing RAB11A, ASAP1, RAB3IP, RAP11FIP3 and ARF4; the complex promotes preciliary trafficking; the complex binds to RHO in photoreceptor cells and promotes RHO ciliary transport.

The protein resides in the golgi apparatus. The protein localises to the membrane. Functionally, GTP-binding protein that functions as an allosteric activator of the cholera toxin catalytic subunit, an ADP-ribosyltransferase. Involved in protein trafficking; may modulate vesicle budding and uncoating within the Golgi apparatus. Part of the ciliary targeting complex containing Rab11, ASAP1, Rabin8/RAB3IP, RAB11FIP3 and ARF4, which direct preciliary vesicle trafficking to mother centriole and ciliogenesis initiation. The sequence is that of ADP-ribosylation factor 4 (Arf4) from Mus musculus (Mouse).